The sequence spans 164 residues: Cyclic pyranopterin monophosphate synthase (164 aa).

Residues 77–79 (LCH) and 115–116 (ME) contribute to the substrate site. Asp130 is a catalytic residue.

The protein belongs to the MoaC family. In terms of assembly, homohexamer; trimer of dimers.

The catalysed reaction is (8S)-3',8-cyclo-7,8-dihydroguanosine 5'-triphosphate = cyclic pyranopterin phosphate + diphosphate. The protein operates within cofactor biosynthesis; molybdopterin biosynthesis. Functionally, catalyzes the conversion of (8S)-3',8-cyclo-7,8-dihydroguanosine 5'-triphosphate to cyclic pyranopterin monophosphate (cPMP). The chain is Cyclic pyranopterin monophosphate synthase from Rhizobium meliloti (strain 1021) (Ensifer meliloti).